The sequence spans 232 residues: Enolase-phosphatase E1 (232 aa).

It belongs to the HAD-like hydrolase superfamily. MasA/MtnC family. Monomer. Mg(2+) is required as a cofactor.

The enzyme catalyses 5-methylsulfanyl-2,3-dioxopentyl phosphate + H2O = 1,2-dihydroxy-5-(methylsulfanyl)pent-1-en-3-one + phosphate. It participates in amino-acid biosynthesis; L-methionine biosynthesis via salvage pathway; L-methionine from S-methyl-5-thio-alpha-D-ribose 1-phosphate: step 3/6. Its pathway is amino-acid biosynthesis; L-methionine biosynthesis via salvage pathway; L-methionine from S-methyl-5-thio-alpha-D-ribose 1-phosphate: step 4/6. Functionally, bifunctional enzyme that catalyzes the enolization of 2,3-diketo-5-methylthiopentyl-1-phosphate (DK-MTP-1-P) into the intermediate 2-hydroxy-3-keto-5-methylthiopentenyl-1-phosphate (HK-MTPenyl-1-P), which is then dephosphorylated to form the acireductone 1,2-dihydroxy-3-keto-5-methylthiopentene (DHK-MTPene). This Xanthomonas campestris pv. campestris (strain B100) protein is Enolase-phosphatase E1.